We begin with the raw amino-acid sequence, 232 residues long: Histone H1.X (232 aa).

The H15 domain occupies 36-112 (HHPSYMDMIK…GATGSFRMGK (77 aa)). The interval 142–232 (ISKAEKTKPS…LRTGTRKSYC (91 aa)) is disordered. Residues 159–197 (KKGKPISTMKKRGVMSKKRSSKNKMAPKAKSHGLKKKGP) are compositionally biased toward basic residues.

It belongs to the histone H1/H5 family.

The protein localises to the nucleus. The protein resides in the chromosome. In Caenorhabditis elegans, this protein is Histone H1.X (hil-1).